Reading from the N-terminus, the 177-residue chain is Protein-export protein SecB (177 aa).

Residues 1–22 (MSDENNSGAAAPEAQNPGQNAA) are disordered. Residues 8-22 (GAAAPEAQNPGQNAA) are compositionally biased toward low complexity.

The protein belongs to the SecB family. As to quaternary structure, homotetramer, a dimer of dimers. One homotetramer interacts with 1 SecA dimer.

It is found in the cytoplasm. Functionally, one of the proteins required for the normal export of preproteins out of the cell cytoplasm. It is a molecular chaperone that binds to a subset of precursor proteins, maintaining them in a translocation-competent state. It also specifically binds to its receptor SecA. This is Protein-export protein SecB from Paracoccus denitrificans (strain Pd 1222).